We begin with the raw amino-acid sequence, 315 residues long: NAD(P)H-dependent anabolic L-arginine dehydrogenase DauB (315 aa).

Belongs to the ornithine cyclodeaminase/mu-crystallin family.

It carries out the reaction L-arginine + NAD(+) + H2O = 5-guanidino-2-oxopentanoate + NH4(+) + NADH + H(+). The catalysed reaction is L-arginine + NADP(+) + H2O = 5-guanidino-2-oxopentanoate + NH4(+) + NADPH + H(+). Involved in the anabolism of D-lysine and D-arginine. Under aerobic conditions, the arginine succinyltransferase (AST) and arginine transaminase (ATA) pathways are 2 major routes for L-arginine utilization as the sole source of carbon and nitrogen. The D-to-L racemization of arginine by DauA and DauB is necessary, before to be channeled into the AST and/or ATA pathways. DauB catalyzes the synthesis of L-arginine from 2-ketoarginine (2-KA) and ammonium. The polypeptide is NAD(P)H-dependent anabolic L-arginine dehydrogenase DauB (Pseudomonas aeruginosa (strain ATCC 15692 / DSM 22644 / CIP 104116 / JCM 14847 / LMG 12228 / 1C / PRS 101 / PAO1)).